The chain runs to 520 residues: Laccase (520 aa).

The signal sequence occupies residues 1–21 (MHTFLRSTALVVAGLSARALA). Plastocyanin-like domains lie at 22–148 (SIGP…FVVY) and 160–304 (VDDD…ILRY). The N-linked (GlcNAc...) asparagine glycan is linked to Asn75. Cu cation-binding residues include His85, His87, His130, and His132. 2 disulfides stabilise this stretch: Cys106/Cys509 and Cys138/Cys227. N-linked (GlcNAc...) asparagine glycans are attached at residues Asn352 and Asn402. One can recognise a Plastocyanin-like 3 domain in the interval 373–496 (TVPVLLQILS…VFAEDIPDVA (124 aa)). Residues His418, His421, His423, His473, Cys474, His475, and His479 each coordinate Cu cation.

This sequence belongs to the multicopper oxidase family. It depends on Cu cation as a cofactor.

The protein resides in the secreted. It catalyses the reaction 4 hydroquinone + O2 = 4 benzosemiquinone + 2 H2O. Functionally, lignin degradation and detoxification of lignin-derived products. This Phlebia radiata (White-rot fungus) protein is Laccase (LAC).